The chain runs to 612 residues: Zinc metalloproteinase-disintegrin-like 8 (612 aa).

Residues 1-20 (MIQVLLVTICLAVFPYQGSS) form the signal peptide. A propeptide spanning residues 21–189 (IILGSGNVND…KKASQLNLTP (169 aa)) is cleaved from the precursor. The region spanning 199 to 395 (KYIELVIVAD…NRPPCILNKP (197 aa)) is the Peptidase M12B domain. E202 contacts Ca(2+). Residue N218 is glycosylated (N-linked (GlcNAc...) asparagine). D286 contacts Ca(2+). Cystine bridges form between C310–C390, C350–C374, and C352–C357. H335 provides a ligand contact to Zn(2+). The active site involves E336. Residues H339 and H345 each contribute to the Zn(2+) site. The Ca(2+) site is built by C390, N393, V405, N408, F410, E412, E415, and D418. The region spanning 403–489 (PPVCGNYFVE…DCPTDDFQRN (87 aa)) is the Disintegrin domain. 14 cysteine pairs are disulfide-bonded: C406–C435, C417–C430, C419–C425, C429–C452, C443–C449, C448–C474, C461–C481, C468–C500, C493–C505, C512–C562, C527–C573, C540–C550, C557–C599, and C593–C605. Positions 467–469 (ECD) match the D/ECD-tripeptide motif. N502 is a glycosylation site (N-linked (GlcNAc...) asparagine).

It belongs to the venom metalloproteinase (M12B) family. P-III subfamily. The cofactor is Zn(2+). As to expression, expressed by the venom gland.

It localises to the secreted. In terms of biological role, snake venom metalloproteinase that impairs hemostasis in the envenomed animal. This is Zinc metalloproteinase-disintegrin-like 8 from Crotalus adamanteus (Eastern diamondback rattlesnake).